The chain runs to 66 residues: M-poneratoxin-Dq3a (66 aa).

Positions 1–23 (MKLSALSIIFGMILVMTIMYTKA) are cleaved as a signal peptide. Positions 24–43 (EAEAEAEADADADAKAEAEA) are excised as a propeptide.

Belongs to the non-disulfide-bridged peptide (NDBP) superfamily. Medium-length antimicrobial peptide (group 3) family. Ponericin-W subfamily. As to expression, expressed by the venom gland.

The protein resides in the secreted. It is found in the target cell membrane. May have antimicrobial properties by disrupting the integrity of the bacterial cell membrane. In addition, when tested in vitro on the parasite Trypanosoma cruzi (responsible of the Chagas disease), is able to potently reduce the number of the three forms (epimastigote, trypomastigote and amastigote) by inducing cell death through necrosis. In terms of biological role, may have antimicrobial properties by disrupting the integrity of the bacterial cell membrane. In addition, when tested in vitro on the parasite Trypanosoma cruzi (responsible of the Chagas disease), is able to moderately reduce the number of the forms epimastigote and trypomastigote. Its activity on the amastigote form has not been tested. Its function is as follows. May have antimicrobial properties by disrupting the integrity of the bacterial cell membrane. In addition, when tested in vitro on the parasite Trypanosoma cruzi (responsible of the Chagas disease), shows only a weak reduction of the number of the trypomastigote forms. Has no activity on the epimastigote forms. Its activity on the amastigote form has not been tested. The chain is M-poneratoxin-Dq3a from Dinoponera quadriceps (South American ant).